A 1343-amino-acid polypeptide reads, in one-letter code: Kinesin-like protein KIF7 (1343 aa).

In terms of domain architecture, Kinesin motor spans 15 to 349 (PVRVALRVRP…LNYASRAQNI (335 aa)). Position 94–101 (94–101 (GQTGSGKT)) interacts with ATP. Disordered stretches follow at residues 356–382 (NWRPEAERPPEETASGARGPPRHRSET), 451–483 (RSALSSASGPDSGIESASVEDQAAQGAGGRKED), and 611–639 (EVNRLGSGSSAASEEEEEEEEPPRRTLHL). An interaction with DLG5 region spans residues 358–479 (RPEAERPPEE…EDQAAQGAGG (122 aa)). The interaction with SMO stretch occupies residues 358–1206 (RPEAERPPEE…LGRYMWINQE (849 aa)). A coiled-coil region spans residues 480–542 (RKEDEGAQQL…ELRLRLELVR (63 aa)). The interval 513–775 (AMEQYKLQSD…LRELEGKELQ (263 aa)) is sufficient for interaction with NPHP1. Coiled coils occupy residues 698–1057 (ASEW…AAIE) and 1109–1211 (TLRE…KQKL). Serine 898 is modified (phosphoserine). 2 disordered regions span residues 1219–1238 (HSRGGEKRSLCSEGRQAPGN) and 1310–1343 (GEAGLPWNFGPLSKPRRELRRASPGMIDVRKNPL).

It belongs to the TRAFAC class myosin-kinesin ATPase superfamily. Kinesin family. KIF27 subfamily. In terms of assembly, can form homodimers and interacts with microtubules. Interacts with GLI1, GLI2, GLI3, SMO and SUFU. Interacts with NPHP1. Interacts with SMO and DLG5 (via PDZ4 or guanylate kinase-like domain). In terms of processing, polyubiquitinated by UBR3. Embryonic stem cells, melanotic melanoma and Jurkat T-cells. Expressed in heart, lung, liver, kidney, testis, retina, placenta, pancreas, colon, small intestin, prostate and thymus.

It is found in the cell projection. Its subcellular location is the cilium. The protein localises to the cytoplasm. It localises to the cytoskeleton. The protein resides in the cilium basal body. Functionally, essential for hedgehog signaling regulation: acts both as a negative and positive regulator of sonic hedgehog (Shh) and Indian hedgehog (Ihh) pathways, acting downstream of SMO, through both SUFU-dependent and -independent mechanisms. Involved in the regulation of microtubular dynamics. Required for proper organization of the ciliary tip and control of ciliary localization of SUFU-GLI2 complexes. Required for localization of GLI3 to cilia in response to Shh. Negatively regulates Shh signaling by preventing inappropriate activation of the transcriptional activator GLI2 in the absence of ligand. Positively regulates Shh signaling by preventing the processing of the transcription factor GLI3 into its repressor form. In keratinocytes, promotes the dissociation of SUFU-GLI2 complexes, GLI2 nuclear translocation and Shh signaling activation. Involved in the regulation of epidermal differentiation and chondrocyte development. The protein is Kinesin-like protein KIF7 (KIF7) of Homo sapiens (Human).